We begin with the raw amino-acid sequence, 294 residues long: 2-hydroxy-3-oxopropionate reductase (294 aa).

Residues 4–18 (GFIGLGIMGKPMSKN) and Ser95 contribute to the NAD(+) site. The active site involves Lys170. Lys238 contributes to the NAD(+) binding site.

This sequence belongs to the HIBADH-related family. 2-hydroxy-3-oxopropionate reductase subfamily.

The catalysed reaction is (R)-glycerate + NADP(+) = 2-hydroxy-3-oxopropanoate + NADPH + H(+). It carries out the reaction (R)-glycerate + NAD(+) = 2-hydroxy-3-oxopropanoate + NADH + H(+). It functions in the pathway carbohydrate acid metabolism; galactarate degradation; D-glycerate from galactarate: step 3/3. Its function is as follows. Catalyzes the reduction of tatronate semialdehyde to D-glycerate. In Escherichia coli O6:H1 (strain CFT073 / ATCC 700928 / UPEC), this protein is 2-hydroxy-3-oxopropionate reductase.